Reading from the N-terminus, the 648-residue chain is Macrolide export ATP-binding/permease protein MacB (648 aa).

In terms of domain architecture, ABC transporter spans 5–243; the sequence is LELKDIRRSY…AGGTEPVVNT (239 aa). ATP is bound at residue 41–48; it reads GASGSGKS. 4 helical membrane-spanning segments follow: residues 273–293, 523–543, 576–596, and 600–620; these read LLTM…VVVG, LFLT…VMNI, AVLV…LIAF, and LFLP…AFLC.

The protein belongs to the ABC transporter superfamily. Macrolide exporter (TC 3.A.1.122) family. Homodimer. Part of the tripartite efflux system MacAB-TolC, which is composed of an inner membrane transporter, MacB, a periplasmic membrane fusion protein, MacA, and an outer membrane component, TolC. The complex forms a large protein conduit and can translocate molecules across both the inner and outer membranes. Interacts with MacA.

Its subcellular location is the cell inner membrane. Its function is as follows. Part of the tripartite efflux system MacAB-TolC. MacB is a non-canonical ABC transporter that contains transmembrane domains (TMD), which form a pore in the inner membrane, and an ATP-binding domain (NBD), which is responsible for energy generation. Confers resistance against macrolides. This Shigella boydii serotype 4 (strain Sb227) protein is Macrolide export ATP-binding/permease protein MacB.